The following is a 38-amino-acid chain: Augerpeptide hhe53 (38 aa).

Post-translationally, contains 2 disulfide bonds. In terms of tissue distribution, expressed by the venom duct.

The protein resides in the secreted. This is Augerpeptide hhe53 from Hastula hectica (Sea snail).